A 415-amino-acid polypeptide reads, in one-letter code: MGLKKFLEDIEHHFEPGGKHEKWFALYEAAATLFYTPGLVTKRSSHVRDSVDLKRIMIMVWLAVFPAMFWGMYNAGGQAIAALNHLYSGDQLAAIVAGNWHYWLTEMLGGTMSSDAGWGSKMLLGATYFLPIYATVFIVGGFWEVLFCMVRKHEVNEGFFVTSILFALIVPPTLPLWQAALGITFGVVVAKEVFGGTGRNFLNPALAGRAFLFFAYPAQISGDLVWTAADGYSGATALSQWAQGGAGALINNATGQTITWMDAFIGNIPGSIGEVSTLALMIGAAFIVYMGIASWRIIGGVMIGMILLSTLFNVIGSDTNAMFNMPWHWHLVLGGFAFGMFFMATDPVSASFTNSGKWAYGILIGVMCVLIRVVNPAYPEGMMLAILFANLFAPLFDHVVVERNIKRRLARYGKQ.

Transmembrane regions (helical) follow at residues 23–40, 56–76, 129–149, and 164–184; these read WFAL…PGLV, IMIM…YNAG, FLPI…LFCM, and ILFA…LGIT. T236 carries the FMN phosphoryl threonine modification. Helical transmembrane passes span 275–295, 297–317, 325–345, 358–378, and 381–401; these read VSTL…IASW, IIGG…VIGS, MPWH…FMAT, WAYG…NPAY, and GMML…HVVV.

This sequence belongs to the NqrB/RnfD family. Composed of six subunits; NqrA, NqrB, NqrC, NqrD, NqrE and NqrF. The cofactor is riboflavin. FMN is required as a cofactor.

It localises to the cell inner membrane. It carries out the reaction a ubiquinone + n Na(+)(in) + NADH + H(+) = a ubiquinol + n Na(+)(out) + NAD(+). NQR complex catalyzes the reduction of ubiquinone-1 to ubiquinol by two successive reactions, coupled with the transport of Na(+) ions from the cytoplasm to the periplasm. NqrA to NqrE are probably involved in the second step, the conversion of ubisemiquinone to ubiquinol. The chain is Na(+)-translocating NADH-quinone reductase subunit B from Vibrio cholerae serotype O1 (strain ATCC 39541 / Classical Ogawa 395 / O395).